Reading from the N-terminus, the 435-residue chain is Xylose isomerase (435 aa).

Mg(2+) is bound by residues D306 and D308.

Belongs to the xylose isomerase family. Homotetramer. Requires Mg(2+) as cofactor.

The protein resides in the cytoplasm. It carries out the reaction alpha-D-xylose = alpha-D-xylulofuranose. The chain is Xylose isomerase from Brucella melitensis biotype 2 (strain ATCC 23457).